We begin with the raw amino-acid sequence, 445 residues long: tRNA-2-methylthio-N(6)-dimethylallyladenosine synthase (445 aa).

An MTTase N-terminal domain is found at 9–125 (LKYRILTYGC…LPYLIARAKE (117 aa)). Positions 18, 54, 88, 162, 166, and 169 each coordinate [4Fe-4S] cluster. The Radical SAM core domain occupies 148–378 (RKPGLSAFVN…NRRQYQIATE (231 aa)). Residues 381-444 (QELQGSIQEV…TFSLFGEIFN (64 aa)) enclose the TRAM domain.

This sequence belongs to the methylthiotransferase family. MiaB subfamily. As to quaternary structure, monomer. The cofactor is [4Fe-4S] cluster.

The protein resides in the cytoplasm. The catalysed reaction is N(6)-dimethylallyladenosine(37) in tRNA + (sulfur carrier)-SH + AH2 + 2 S-adenosyl-L-methionine = 2-methylsulfanyl-N(6)-dimethylallyladenosine(37) in tRNA + (sulfur carrier)-H + 5'-deoxyadenosine + L-methionine + A + S-adenosyl-L-homocysteine + 2 H(+). Catalyzes the methylthiolation of N6-(dimethylallyl)adenosine (i(6)A), leading to the formation of 2-methylthio-N6-(dimethylallyl)adenosine (ms(2)i(6)A) at position 37 in tRNAs that read codons beginning with uridine. In Syntrophomonas wolfei subsp. wolfei (strain DSM 2245B / Goettingen), this protein is tRNA-2-methylthio-N(6)-dimethylallyladenosine synthase.